The chain runs to 272 residues: MKITRSRCLILSFVLVCGLVPEVTADVEEATDGLSTTQEPIWLTDVPATVELIAAAEVAVIGFFQDLEIPIVSVFRSMARQFQDVSFGISNHSEVLTHYNVTSNSICLFRLVDDQQLHLNAEDIENLDAAKLSRFIHVNNLHWVTEYSPMIAAGLFNTMVQTHLLLMMKKTSPEYEESMRRYREAAKLFQGQILFVLVDSGKRENGKVMSYFKLKESQLPALAIYESVDDKWDTLPIAEVTVEKVRGFCEGFLKGLLQRDHEAEGDSGKEEL.

Residues 1-25 (MKITRSRCLILSFVLVCGLVPEVTA) form the signal peptide. Residues 39–152 (EPIWLTDVPA…WVTEYSPMIA (114 aa)) enclose the Thioredoxin domain. Asn91 and Asn100 each carry an N-linked (GlcNAc...) asparagine glycan. Positions 230–233 (DKWD) are PDIA3-binding site. Residues 269-272 (KEEL) carry the Prevents secretion from ER motif.

Belongs to the protein disulfide isomerase family. In terms of assembly, interacts with PDIA3.

It localises to the endoplasmic reticulum lumen. Functionally, specifically binds unfolded proteins and may recruit protein disulfide isomerase PDIA3 to unfolded substrates. Binds protein substrates via a hydrophobic pocket in the C-terminal domain. May play a role in the unfolded stress response. The polypeptide is Endoplasmic reticulum resident protein 27 (Erp27) (Mus musculus (Mouse)).